We begin with the raw amino-acid sequence, 350 residues long: Xylene/toluene monooxygenase electron transfer component XylA (350 aa).

Residues 16 to 108 (PESTVSVRGQ…DLEIELDTVL (93 aa)) enclose the 2Fe-2S ferredoxin-type domain. 4 residues coordinate [2Fe-2S] cluster: cysteine 52, cysteine 57, cysteine 60, and cysteine 92. Residues 109–350 (GQALVPIETS…ADRFYNRPPC (242 aa)) form a ferredoxin--NADH reductase region. The FAD-binding FR-type domain occupies 114–213 (PIETSALISK…RAPYGQFGLH (100 aa)).

It belongs to the bacterial ring-hydroxylating dioxygenase ferredoxin reductase family. As to quaternary structure, monomer. The xylene/toluene monooxygenase is composed of two subunits: the electron transfer component XylA and the hydroxylase component XylM. FAD serves as cofactor. Requires [2Fe-2S] cluster as cofactor.

The protein resides in the cell inner membrane. It carries out the reaction 2 reduced [2Fe-2S]-[ferredoxin] + NAD(+) + H(+) = 2 oxidized [2Fe-2S]-[ferredoxin] + NADH. With respect to regulation, the reductase activity is completely inhibited by quercetin (a common inhibitor of mammalian oxidoreductases) and p-chloromercuribenzoate, but not by iodoacetimide, N-ethylmaleimide and pyrrazole. Component of a monooxygenase that catalyzes the first step in the degradation of xylenes and toluenes. XylA is responsible for the transport of electrons from the electron donor NADH to the terminal hydroxylase component, XylM. The chain is Xylene/toluene monooxygenase electron transfer component XylA from Pseudomonas putida (Arthrobacter siderocapsulatus).